The sequence spans 706 residues: Frizzled-6 (706 aa).

The first 18 residues, 1–18 (MEMFTFLLTCIFLPLLRG), serve as a signal peptide directing secretion. The region spanning 19–132 (HSLFTCEPIT…CDRLQYCDET (114 aa)) is the FZ domain. Residues 19-201 (HSLFTCEPIT…SDELEFAKSF (183 aa)) lie on the Extracellular side of the membrane. Intrachain disulfides connect cysteine 24–cysteine 85, cysteine 32–cysteine 78, cysteine 69–cysteine 106, cysteine 95–cysteine 129, and cysteine 99–cysteine 123. A glycan (N-linked (GlcNAc...) asparagine) is linked at asparagine 38. A helical membrane pass occupies residues 202 to 222 (IGTVSIFCLCATLFTFLTFLI). At 223 to 233 (DVRRFRYPERP) the chain is on the cytoplasmic side. A helical transmembrane segment spans residues 234-254 (IIYYSVCYSIVSLMYFIGFLL). Residues 255–284 (GDSTACNKADEKLELGDTVVLGSQNKACTV) lie on the Extracellular side of the membrane. A helical membrane pass occupies residues 285–305 (LFMLLYFFTMAGTVWWVILTI). The Cytoplasmic segment spans residues 306 to 324 (TWFLAAGRKWSCEAIEQKA). Residues 325-345 (VWFHAVAWGTPGFLTVMLLAM) traverse the membrane as a helical segment. Residues 346-370 (NKVEGDNISGVCFVGLYDLDASRYF) are Extracellular-facing. N-linked (GlcNAc...) asparagine glycosylation is present at asparagine 352. A helical membrane pass occupies residues 371–391 (VLLPLCLCVFVGLSLLLAGII). The Cytoplasmic portion of the chain corresponds to 392–416 (SLNHVRQVIQHDGRNQEKLKKFMIR). Residues 417–437 (IGVFSGLYLVPLVTLLGCYVY) form a helical membrane-spanning segment. Over 438–473 (EQVNRITWEITWVSDHCRQYHIPCPYQAKAKARPEL) the chain is Extracellular. The chain crosses the membrane as a helical span at residues 474–494 (ALFMIKYLMTLIVGISAVFWV). Topologically, residues 495 to 706 (GSKKTCTEWA…EQGGGCHSDT (212 aa)) are cytoplasmic. A Lys-Thr-X-X-X-Trp motif, mediates interaction with the PDZ domain of Dvl family members motif is present at residues 498–503 (KTCTEW). The interval 588-706 (EIQTSPETSM…EQGGGCHSDT (119 aa)) is disordered. Positions 646 to 658 (ARSEGRISPKSDI) are enriched in basic and acidic residues. Serine 653 carries the phosphoserine modification. A compositionally biased stretch (polar residues) spans 662–672 (GLAQSNNLQVP). The span at 673–685 (SSSEPSSLKGSTS) shows a compositional bias: low complexity. A compositionally biased stretch (basic and acidic residues) spans 694–706 (VRKEQGGGCHSDT).

It belongs to the G-protein coupled receptor Fz/Smo family. In terms of assembly, interacts with LMBR1L. In terms of processing, ubiquitinated by ZNRF3, leading to its degradation by the proteasome. As to expression, detected in adult heart, brain, placenta, lung, liver, skeletal muscle, kidney, pancreas, thymus, prostate, testis, ovary, small intestine and colon. In the fetus, expressed in brain, lung, liver and kidney.

It localises to the membrane. The protein resides in the cell membrane. Its subcellular location is the cell surface. The protein localises to the apical cell membrane. It is found in the cytoplasmic vesicle membrane. It localises to the endoplasmic reticulum membrane. Receptor for Wnt proteins. Most of frizzled receptors are coupled to the beta-catenin canonical signaling pathway, which leads to the activation of disheveled proteins, inhibition of GSK-3 kinase, nuclear accumulation of beta-catenin and activation of Wnt target genes. A second signaling pathway involving PKC and calcium fluxes has been seen for some family members, but it is not yet clear if it represents a distinct pathway or if it can be integrated in the canonical pathway, as PKC seems to be required for Wnt-mediated inactivation of GSK-3 kinase. Both pathways seem to involve interactions with G-proteins. May be involved in transduction and intercellular transmission of polarity information during tissue morphogenesis and/or in differentiated tissues. Together with FZD3, is involved in the neural tube closure and plays a role in the regulation of the establishment of planar cell polarity (PCP), particularly in the orientation of asymmetric bundles of stereocilia on the apical faces of a subset of auditory and vestibular sensory cells located in the inner ear. This Homo sapiens (Human) protein is Frizzled-6 (FZD6).